The sequence spans 73 residues: U3-agatoxin-Ao1i (73 aa).

An N-terminal signal peptide occupies residues 1 to 20; the sequence is MRTIISLLLLSAMVFAEIEA. The propeptide occupies 21-34; it reads ISLEEGLQLFEGER. 4 disulfide bridges follow: cysteine 36-cysteine 52, cysteine 43-cysteine 57, cysteine 51-cysteine 67, and cysteine 59-cysteine 65. Residue serine 71 is modified to Serine amide.

The protein belongs to the neurotoxin 07 (Beta/delta-agtx) family. 03 (aga-4) subfamily. Aga sub-subfamily. In terms of tissue distribution, expressed by the venom gland.

The protein localises to the secreted. Insecticidal neurotoxin that induces an irreversible spastic paralysis when injected into insects. Modifies presynaptic voltage-gated sodium channels (Nav), causing them to open at the normal resting potential of the nerve. This leads to spontaneous release of neurotransmitter and repetitive action potentials in motor neurons. This is U3-agatoxin-Ao1i from Agelena orientalis (Funnel-web spider).